Here is a 282-residue protein sequence, read N- to C-terminus: Probable endonuclease 4 (282 aa).

9 residues coordinate Zn(2+): His-69, His-109, Glu-145, Asp-179, His-182, His-216, Asp-229, His-231, and Glu-261.

The protein belongs to the AP endonuclease 2 family. The cofactor is Zn(2+).

It carries out the reaction Endonucleolytic cleavage to 5'-phosphooligonucleotide end-products.. Endonuclease IV plays a role in DNA repair. It cleaves phosphodiester bonds at apurinic or apyrimidinic (AP) sites, generating a 3'-hydroxyl group and a 5'-terminal sugar phosphate. In Magnetococcus marinus (strain ATCC BAA-1437 / JCM 17883 / MC-1), this protein is Probable endonuclease 4.